A 198-amino-acid chain; its full sequence is NAD(P)H dehydrogenase (quinone) (198 aa).

Residues 4–190 enclose the Flavodoxin-like domain; the sequence is ILVLYYSMYG…ILASFQGAHV (187 aa). Residues 10 to 15 and 79 to 81 each bind FMN; these read SMYGHI and TRF. An NAD(+)-binding site is contributed by Tyr12. Trp99 is a binding site for substrate. FMN contacts are provided by residues 114-119 and His134; that span reads STGTGG.

It belongs to the WrbA family. It depends on FMN as a cofactor.

The catalysed reaction is a quinone + NADH + H(+) = a quinol + NAD(+). It catalyses the reaction a quinone + NADPH + H(+) = a quinol + NADP(+). The polypeptide is NAD(P)H dehydrogenase (quinone) (Azotobacter vinelandii (strain DJ / ATCC BAA-1303)).